We begin with the raw amino-acid sequence, 566 residues long: Chondroitin sulfate proteoglycan 5 (566 aa).

An N-terminal signal peptide occupies residues 1–30; that stretch reads MGRAGGGGPGRGPPPLLLFLGAALVLASGA. Residues 31–423 are Extracellular-facing; sequence VPAREAGSAV…SIITDFQVMC (393 aa). Ser38 carries an O-linked (Xyl...) (chondroitin sulfate) serine glycan. Positions 39–82 are disordered; the sequence is AVEAEELVKGSPAWEPPANDTREEAGPPAAGEDEASWTAPGGEL. Residue Asn57 is glycosylated (N-linked (GlcNAc...) asparagine). Ser117 carries an O-linked (Xyl...) (chondroitin sulfate) serine glycan. Disordered regions lie at residues 143–202, 215–248, and 262–354; these read IPEA…LEPQ, GLDGEGRGADLGSFPGSPGTSENHPDTEGETPSW, and ESDF…ASSE. Residue Ser165 is glycosylated (O-linked (GalNAc...) serine). The tract at residues 264–301 is interaction with TNC and TNR; it reads DFYPTTSFYDDLDEEEEEEEDDKDAVGGGDLEDENELL. Residues 273–286 show a composition bias toward acidic residues; the sequence is DDLDEEEEEEEDDK. The EGF-like domain occupies 371–413; sequence RSVCDLFPSYCHNGGQCYLVENIGAFCRCNTQDYIWHKGMRCE. Cystine bridges form between Cys374–Cys387, Cys381–Cys397, and Cys399–Cys412. Residues 424-444 form a helical membrane-spanning segment; sequence VAVGSAALVLLLLFMMTVFFA. The segment at 442–460 is interaction with GOPC; it reads FFAKKLYLLKTENTKLRRT. The Cytoplasmic segment spans residues 445 to 566; sequence KKLYLLKTEN…DVNCLQNNLT (122 aa). 4 positions are modified to phosphoserine: Ser467, Ser475, Ser483, and Ser543.

As to quaternary structure, binds TNR and probably TNC. Interacts with ERBB3 and GOPC. Interacts with MDK; this interaction is independent of the presence of chondroitin sulfate chains and promotes elongation of oligodendroglial precursor-like cells. N-glycosylated. Post-translationally, O-glycosylated; contains chondroitin sulfate glycans. Part-time proteoglycan, expressed in part as a proteoglycan exhibiting chondroitin sulfate glycans and in part as a non-proteoglycan form. The relative amount of both forms depends on tissues and tissue maturation. In terms of processing, phosphorylated; in intracellular and extracellular parts. Detected in cerebrospinal fluid (at protein level). Detected in urine (at protein level). Expressed in brain (at protein level).

It is found in the cell membrane. Its subcellular location is the synaptic cell membrane. The protein localises to the endoplasmic reticulum membrane. The protein resides in the golgi apparatus membrane. It localises to the cell surface. It is found in the secreted. In terms of biological role, may function as a growth and differentiation factor involved in neuritogenesis. May induce ERBB3 activation. In Homo sapiens (Human), this protein is Chondroitin sulfate proteoglycan 5 (CSPG5).